Here is a 334-residue protein sequence, read N- to C-terminus: Anthranilate phosphoribosyltransferase (334 aa).

5-phospho-alpha-D-ribose 1-diphosphate contacts are provided by residues G79, 82–83, S87, 89–92, 107–115, and S119; these read GD, NIST, and KHGNRSISS. An anthranilate-binding site is contributed by G79. S91 serves as a coordination point for Mg(2+). N110 serves as a coordination point for anthranilate. R165 is an anthranilate binding site. Positions 224 and 225 each coordinate Mg(2+).

Belongs to the anthranilate phosphoribosyltransferase family. In terms of assembly, homodimer. Mg(2+) serves as cofactor.

It carries out the reaction N-(5-phospho-beta-D-ribosyl)anthranilate + diphosphate = 5-phospho-alpha-D-ribose 1-diphosphate + anthranilate. The protein operates within amino-acid biosynthesis; L-tryptophan biosynthesis; L-tryptophan from chorismate: step 2/5. Functionally, catalyzes the transfer of the phosphoribosyl group of 5-phosphorylribose-1-pyrophosphate (PRPP) to anthranilate to yield N-(5'-phosphoribosyl)-anthranilate (PRA). The chain is Anthranilate phosphoribosyltransferase from Streptococcus pneumoniae serotype 19F (strain G54).